A 71-amino-acid polypeptide reads, in one-letter code: Heat-stable enterotoxin II (71 aa).

A signal peptide spans 1-23 (MKKNIAFLLASMFVFSIATNAYA). 2 disulfide bridges follow: Cys-33–Cys-71 and Cys-44–Cys-59.

Its subcellular location is the secreted. In terms of biological role, toxin which activates the particulate form of guanylate cyclase and increases cyclic GMP levels within the host intestinal epithelial cells. In Escherichia coli, this protein is Heat-stable enterotoxin II (stiI).